Consider the following 322-residue polypeptide: Undecaprenyl-phosphate 4-deoxy-4-formamido-L-arabinose transferase (322 aa).

Residues 1 to 235 lie on the Cytoplasmic side of the membrane; it reads MFEIHPVKKV…TCLTTTPLRM (235 aa). The helical transmembrane segment at 236 to 256 threads the bilayer; that stretch reads LSLLGSIIAIGGFSIAVLLVI. At 257 to 269 the chain is on the periplasmic side; that stretch reads LRLTFGPQWAAEG. The chain crosses the membrane as a helical span at residues 270–290; sequence VFMLFAVLFTFIGAQFIGMGL. Residues 291–322 are Cytoplasmic-facing; the sequence is LGEYIGRIYTDVRARPRYFVQQVIRPSSKENE.

Belongs to the glycosyltransferase 2 family.

The protein localises to the cell inner membrane. The catalysed reaction is UDP-4-deoxy-4-formamido-beta-L-arabinose + di-trans,octa-cis-undecaprenyl phosphate = 4-deoxy-4-formamido-alpha-L-arabinopyranosyl di-trans,octa-cis-undecaprenyl phosphate + UDP. Its pathway is glycolipid biosynthesis; 4-amino-4-deoxy-alpha-L-arabinose undecaprenyl phosphate biosynthesis; 4-amino-4-deoxy-alpha-L-arabinose undecaprenyl phosphate from UDP-4-deoxy-4-formamido-beta-L-arabinose and undecaprenyl phosphate: step 1/2. The protein operates within bacterial outer membrane biogenesis; lipopolysaccharide biosynthesis. Its function is as follows. Catalyzes the transfer of 4-deoxy-4-formamido-L-arabinose from UDP to undecaprenyl phosphate. The modified arabinose is attached to lipid A and is required for resistance to polymyxin and cationic antimicrobial peptides. The sequence is that of Undecaprenyl-phosphate 4-deoxy-4-formamido-L-arabinose transferase from Escherichia coli (strain SMS-3-5 / SECEC).